Here is a 317-residue protein sequence, read N- to C-terminus: Gamma-glutamyl hydrolase (317 aa).

The N-terminal stretch at 1 to 24 is a signal peptide; that stretch reads MANLGYLLCLLGLLLCGLSSPGMS. The region spanning 25-317 is the Gamma-glutamyl hydrolase domain; the sequence is RPYNHGSERP…SSFQQAYMFD (293 aa). Residue Asn-100 is glycosylated (N-linked (GlcNAc...) (high mannose) asparagine). Cys-133 serves as the catalytic Nucleophile. Residues Asn-162 and Asn-188 are each glycosylated (N-linked (GlcNAc...) (high mannose) asparagine). An N-linked (GlcNAc...) asparagine glycan is attached at Asn-202. Catalysis depends on His-243, which acts as the Proton donor. N-linked (GlcNAc...) asparagine glycosylation occurs at Asn-306.

The protein belongs to the peptidase C26 family. Homodimer. Isoform I (more expressed than isoform II in all tissues) is highly expressed in salivary gland, followed by kidney, liver, lung, stomach and uterus, and weakly expressed in small intestine, brain and fetal liver. Also expressed at a lower level in thymus, spleen and skeletal muscle. Also expressed in tumors.

Its subcellular location is the secreted. The protein localises to the extracellular space. It is found in the lysosome. The protein resides in the melanosome. The enzyme catalyses (6S)-5,6,7,8-tetrahydrofolyl-(gamma-L-Glu)(n) + (n-1) H2O = (6S)-5,6,7,8-tetrahydrofolate + (n-1) L-glutamate. Hydrolyzes the polyglutamate sidechains of pteroylpolyglutamates. Progressively removes gamma-glutamyl residues from pteroylpoly-gamma-glutamate to yield pteroyl-alpha-glutamate (folic acid) and free glutamate. May play an important role in the bioavailability of dietary pteroylpolyglutamates and in the metabolism of pteroylpolyglutamates and antifolates. This chain is Gamma-glutamyl hydrolase (Ggh), found in Mus musculus (Mouse).